The primary structure comprises 457 residues: Amidophosphoribosyltransferase (457 aa).

The active-site Nucleophile is Cys-2. The Glutamine amidotransferase type-2 domain occupies 2 to 223 (CGVVGIYHPD…PGKAAIIKDG (222 aa)). A [4Fe-4S] cluster-binding site is contributed by Cys-239. The Mg(2+) site is built by Ser-286, Asp-348, and Asp-349. [4Fe-4S] cluster contacts are provided by Cys-385, Cys-438, and Cys-441.

This sequence in the C-terminal section; belongs to the purine/pyrimidine phosphoribosyltransferase family. Mg(2+) serves as cofactor. Requires [4Fe-4S] cluster as cofactor.

It carries out the reaction 5-phospho-beta-D-ribosylamine + L-glutamate + diphosphate = 5-phospho-alpha-D-ribose 1-diphosphate + L-glutamine + H2O. The protein operates within purine metabolism; IMP biosynthesis via de novo pathway; N(1)-(5-phospho-D-ribosyl)glycinamide from 5-phospho-alpha-D-ribose 1-diphosphate: step 1/2. Its function is as follows. Catalyzes the formation of phosphoribosylamine from phosphoribosylpyrophosphate (PRPP) and glutamine. In Archaeoglobus fulgidus (strain ATCC 49558 / DSM 4304 / JCM 9628 / NBRC 100126 / VC-16), this protein is Amidophosphoribosyltransferase.